A 172-amino-acid polypeptide reads, in one-letter code: MDLKEKIRIIDGFPKEGISFKDITTLIGDGEGLKASIDMFVEYLKDKNVDLIVGPEARGFIFGVPVAYALGAGFVPVRKPGKLPGETISVNYDLEYGSDSLQIHKDSIKKGQRVAIVDDLLATGGTVEGVAKLVEEAGGEVVSLAFLIELIDLKGRDKLGDYDVISLTQYDI.

Belongs to the purine/pyrimidine phosphoribosyltransferase family. As to quaternary structure, homodimer.

The protein resides in the cytoplasm. It carries out the reaction AMP + diphosphate = 5-phospho-alpha-D-ribose 1-diphosphate + adenine. It functions in the pathway purine metabolism; AMP biosynthesis via salvage pathway; AMP from adenine: step 1/1. Its function is as follows. Catalyzes a salvage reaction resulting in the formation of AMP, that is energically less costly than de novo synthesis. The chain is Adenine phosphoribosyltransferase from Clostridium botulinum (strain Eklund 17B / Type B).